Consider the following 241-residue polypeptide: MARPDGRLPDHLRPVTLTRGWSTHPEGSVLVEFGATRVLCTASVTEGVPRWRKGSGLGWVTAEYAMLPRATNTRSDRESVKGRVGGRTHEISRLIGRSLRASIDLKALGENSIVLDCDVLQADGGTRTAAITGAYVALHDAVTWLAARRSLAGRPETVMHRSVAAVSVGVVAGEPRLDLNYAEDASAEVDLNVVCTGAGDFVEVQGTGEAGVFSRGQLDALLDLAVAGCVELAEAQRKALS.

Phosphate-binding positions include Arg87 and 125-127 (GTR).

It belongs to the RNase PH family. In terms of assembly, homohexameric ring arranged as a trimer of dimers.

The enzyme catalyses tRNA(n+1) + phosphate = tRNA(n) + a ribonucleoside 5'-diphosphate. Functionally, phosphorolytic 3'-5' exoribonuclease that plays an important role in tRNA 3'-end maturation. Removes nucleotide residues following the 3'-CCA terminus of tRNAs; can also add nucleotides to the ends of RNA molecules by using nucleoside diphosphates as substrates, but this may not be physiologically important. Probably plays a role in initiation of 16S rRNA degradation (leading to ribosome degradation) during starvation. The protein is Ribonuclease PH of Salinispora tropica (strain ATCC BAA-916 / DSM 44818 / JCM 13857 / NBRC 105044 / CNB-440).